The chain runs to 664 residues: Acetylcholinesterase (664 aa).

A signal peptide spans 1-29 (MFVNQRTRRPYMSVFVLVLGAAVICPAYG). A disulfide bridge links Cys-95 with Cys-122. N-linked (GlcNAc...) asparagine glycosylation is present at Asn-117. The active-site Acyl-ester intermediate is Ser-261. Cys-315 and Cys-330 form a disulfide bridge. An N-linked (GlcNAc...) asparagine glycan is attached at Asn-316. Residues Glu-390 and His-504 each act as charge relay system in the active site. Cysteines 466 and 588 form a disulfide. A glycan (N-linked (GlcNAc...) asparagine) is linked at Asn-517. Residue Asn-647 is the site of GPI-anchor amidated asparagine attachment. The propeptide at 648 to 664 (KTPPHPQVILETRAFMH) is removed in mature form.

The protein belongs to the type-B carboxylesterase/lipase family. In terms of assembly, homodimer; disulfide-linked.

The protein resides in the synapse. The protein localises to the cell membrane. It catalyses the reaction acetylcholine + H2O = choline + acetate + H(+). Rapidly hydrolyzes choline released into the synapse. It can hydrolyze butyrylthiocholine. This chain is Acetylcholinesterase, found in Anopheles stephensi (Indo-Pakistan malaria mosquito).